A 486-amino-acid polypeptide reads, in one-letter code: Cobyric acid synthase (486 aa).

The 188-residue stretch at 248–435 folds into the GATase cobBQ-type domain; sequence VLNVVVPVLP…LHGLFESPAA (188 aa). C329 acts as the Nucleophile in catalysis. Residue H427 is part of the active site.

This sequence belongs to the CobB/CobQ family. CobQ subfamily.

Its pathway is cofactor biosynthesis; adenosylcobalamin biosynthesis. Catalyzes amidations at positions B, D, E, and G on adenosylcobyrinic A,C-diamide. NH(2) groups are provided by glutamine, and one molecule of ATP is hydrogenolyzed for each amidation. The sequence is that of Cobyric acid synthase from Pseudomonas syringae pv. tomato (strain ATCC BAA-871 / DC3000).